The following is a 963-amino-acid chain: Thrombospondin-4 (963 aa).

The signal sequence occupies residues 1–26; sequence MPAPRAAAAAFLLLHLVLQPWQRTSA. Positions 29–194 constitute a Laminin G-like domain; sequence TPQVFDLLPS…LEELKLVVRG (166 aa). A Cell attachment site motif is present at residues 138–140; it reads RGD. Residues 288-327 enclose the EGF-like 1 domain; sequence PTRHCDSSPCFRGVRCTDTRDGFQCGPCPDGYTGNGITCS. 21 cysteine pairs are disulfide-bonded: cysteine 292–cysteine 303, cysteine 297–cysteine 312, cysteine 315–cysteine 326, cysteine 332–cysteine 343, cysteine 337–cysteine 352, cysteine 355–cysteine 379, cysteine 385–cysteine 396, cysteine 390–cysteine 405, cysteine 408–cysteine 420, cysteine 426–cysteine 440, cysteine 434–cysteine 450, cysteine 452–cysteine 463, cysteine 479–cysteine 484, cysteine 489–cysteine 509, cysteine 525–cysteine 545, cysteine 548–cysteine 568, cysteine 584–cysteine 604, cysteine 607–cysteine 627, cysteine 645–cysteine 665, cysteine 685–cysteine 705, and cysteine 721–cysteine 942. The EGF-like 2; calcium-binding domain maps to 328-365; the sequence is DVDECKYHPCYPGVRCVNLAPGFRCDACPVGFTGPMVQ. Positions 381-418 constitute an EGF-like 3; calcium-binding domain; sequence DVDECQNGACVLNSICINTLGSYRCGPCKPGYTGDQTR. An EGF-like 4 domain is found at 422 to 464; sequence TERSCRNPEQNPCSVHAQCIEERQGDVTCVCGVGWAGDGYVCG. TSP type-3 repeat units follow at residues 465–497, 498–533, 534–556, 557–592, 593–615, 616–653, 654–693, and 694–729; these read KDVDIDSYPDEELPCSARNCKKDNCKYVPNSGQ, EDADRDGIGDACDEDADGDGILNEQDNCVLTHNIDQ, RNSDKDIFGDACDNCRMVLNNDQ, KDTDGDGRGDACDDDMDGDGIKNILDNCPRVPNRDQ, QDRDGDDVGDACDSCPDVSNPNQ, SDVDNDLVGDSCDTNQDSDGDGHQDSTDNCPTVINSSQ, LDTDKDGIGDECDDDDDNDGIPDLVPPGPDNCRLVPNPAQ, and EDSNNDGVGDICEADFDQDQVIDHIDVCPENAEITL. The short motif at 564-566 is the Cell attachment site element; it reads RGD. The tract at residues 579 to 676 is disordered; that stretch reads NILDNCPRVP…DDDDNDGIPD (98 aa). Asparagine 614 and asparagine 650 each carry an N-linked (GlcNAc...) asparagine glycan. Over residues 642–654 the composition is skewed to polar residues; sequence TDNCPTVINSSQL. Residues 662–673 are compositionally biased toward acidic residues; the sequence is GDECDDDDDNDG. The 215-residue stretch at 733–947 folds into the TSP C-terminal domain; that stretch reads RAYQTVVLDP…LKYRCNDTIP (215 aa). Asparagine 943 carries an N-linked (GlcNAc...) asparagine glycan.

It belongs to the thrombospondin family. Homopentamer; disulfide-linked. Interacts with PTBP3. Interacts (via EGF-like 3; calcium-binding domain) with ATF6 and facilitates its processing, activation and nuclear translocation. Interacts with NOTCH1. As to expression, heart. Up-regulated in the heart in response to ischemic injury and pathology (at protein level). Astrocytes; expressed at high levels in subventricular zone (SVZ)-derived astrocytes and at low levels in cortical astrocytes. In response to peripheral nerve injury, significantly up-regulated in the dorsal spinal cord (at protein level).

The protein localises to the endoplasmic reticulum. Its subcellular location is the sarcoplasmic reticulum. It is found in the secreted. The protein resides in the extracellular space. It localises to the extracellular matrix. In terms of biological role, adhesive glycoprotein that mediates cell-to-cell and cell-to-matrix interactions and is involved in various processes including cellular proliferation, migration, adhesion and attachment, inflammatory response to CNS injury, regulation of vascular inflammation and adaptive responses of the heart to pressure overload and in myocardial function and remodeling. Binds to structural extracellular matrix (ECM) proteins and modulates the ECM in response to tissue damage, contributing to cardioprotective and adaptive ECM remodeling. Plays a role in ER stress response, via its interaction with the activating transcription factor 6 alpha (ATF6) which produces adaptive ER stress response factors and protects myocardium from pressure overload. May contribute to spinal presynaptic hypersensitivity and neuropathic pain states after peripheral nerve injury. May play a role in regulating protective astrogenesis from the subventricular zone (SVZ) niche after injury in a NOTCH1-dependent manner. This Mus musculus (Mouse) protein is Thrombospondin-4 (Thbs4).